The primary structure comprises 532 residues: MEKVREARIARTLATQHPDATKFVRVQEEPEEAVECLVELGAEEYMVDFEGKLTPYLQPIQVLMELYDAGVRVGEERFVIVRVPSATKENVLRQVQALLGVMEANSELLKEDPDARGIFEVVHPMTSSPEELVETVDRISYARRFASRELDVPLKAGNLRIIPLIEEVPELLDIRNILTGYVEGMREIGMDVSYLRVFIGRSDPALSYGHLPAVLACKLAIFEVYELSDELGVPMAPILGGGCLPFRGHIRPGMEEEFVEEYAGTATYTVQSGFRYDHDREKAVASIRRINELAANDPLQLSGDDIEYLVLATAIFMKHYLSVFFRCIGTLNIVADMIPNTRDRLARKGPVGYARDIPEPDRVGAQCKDLGDVGRELYRELRRMRVEKLPELPRAIKFTGACYTVGMPPELIGTGRGLAEIEERLGEDALDAVISRLYPMLREDLQFAVEYTFLETAGSVLPSSGVAMVNTDLEYCVEYLDLEPPSDFEYQNLVHTLEPYLRYVVSEGGVEEVNPFVRDLLLEMGRMRGSLG.

Belongs to the PEPCase type 2 family. Homotetramer. Requires Mg(2+) as cofactor.

It carries out the reaction oxaloacetate + phosphate = phosphoenolpyruvate + hydrogencarbonate. Its function is as follows. Catalyzes the irreversible beta-carboxylation of phosphoenolpyruvate (PEP) to form oxaloacetate (OAA), a four-carbon dicarboxylic acid source for the tricarboxylic acid cycle. The sequence is that of Phosphoenolpyruvate carboxylase from Methanopyrus kandleri (strain AV19 / DSM 6324 / JCM 9639 / NBRC 100938).